We begin with the raw amino-acid sequence, 462 residues long: MTITPATHAISINPATGEQLSVLPWAGADDIENALQLAAAGFRDWRETNIDYRAEKLRDIGKALRARSEEMAQMITREMGKPINQARAEVAKSANLCDWYAEHGPAMLKAEPTLVENQQAVIEYRPLGTILAIMPWNFPLWQVMRGAVPIILAGNGYLLKHAPNVMGCAQLIAQVFKDAGIPQGVYGWLNADNDGVSQMIKDSRIAAVTVTGSVRAGAAIGAQAGAALKKCVLELGGSDPFIVLNDADLELAVKAAVAGRYQNTGQVCAAAKRFIIEEGIASAFTERFVAAAAALKMGDPRDEENALGPMARFDLRDELHHQVEKTLAQGARLLLGGEKMAGAGNYYPPTVLANVTPEMTAFREEMFGPVAAITIAKDAEHALELANDSEFGLSATIFTTDETQARQMAARLECGGVFINGYCASDARVAFGGVKKSGFGRELSHFGLHEFCNIQTVWKDRI.

NADP(+)-binding positions include 136–137 (WN), 160–163 (KHAP), and 212–213 (GS). The Proton acceptor role is filled by Glu234. NADP(+) is bound at residue Leu235. The Nucleophile role is filled by Cys268. Glu365 lines the NADP(+) pocket.

The protein belongs to the aldehyde dehydrogenase family. Homodimer.

It carries out the reaction succinate semialdehyde + NAD(+) + H2O = succinate + NADH + 2 H(+). The enzyme catalyses succinate semialdehyde + NADP(+) + H2O = succinate + NADPH + 2 H(+). Its pathway is amino-acid degradation; 4-aminobutanoate degradation. In terms of biological role, catalyzes the NAD(+)-dependent oxidation of succinate semialdehyde to succinate. It acts preferentially with NAD as cosubstrate but can also use NADP. Prevents the toxic accumulation of succinate semialdehyde (SSA) and plays an important role when arginine and putrescine are used as the sole nitrogen or carbon sources. The polypeptide is Succinate semialdehyde dehydrogenase [NAD(P)+] Sad (sad) (Escherichia coli (strain K12)).